The chain runs to 586 residues: Protein CBFA2T2 (586 aa).

Residues 1–95 (MVGIPGPYQF…SSSSSLANQQ (95 aa)) are disordered. Residues 56–68 (SSHSNGINHSPPT) are compositionally biased toward polar residues. The segment covering 77–90 (QRSSNGPSSSSSSS) has biased composition (low complexity). Positions 102-197 (VRQLSKLKRF…TPSQYLAQHE (96 aa)) constitute a TAFH domain. Disordered stretches follow at residues 204–242 (STSS…AEPP) and 387–417 (IRKG…FGSR). Over residues 228-237 (DRREEERETA) the composition is skewed to basic and acidic residues. Residues 399–409 (SPSSTDSGASD) show a composition bias toward low complexity. Residues 429–481 (RKAEEAVNEVKRQAMSEVQKAVSEAEQKAFEMIASERARMEQTIVDAKRRAAE) are a coiled coil. 8 residues coordinate Zn(2+): C497, C500, C508, C511, C517, C521, H529, and C533. The MYND-type zinc-finger motif lies at 497–533 (CWNCGRKASETCSGCNIARYCGSFCQHKDWEKHHRIC). Residues 561 to 586 (SPTLERSSSATSRSSTPASVTAVDGL) are disordered. The segment covering 566–586 (RSSSATSRSSTPASVTAVDGL) has biased composition (low complexity).

It localises to the nucleus. Functionally, may act as a transcriptional corepressor. This is Protein CBFA2T2 (cbfa2t2) from Xenopus laevis (African clawed frog).